The sequence spans 424 residues: GTPase Obg (424 aa).

An Obg domain is found at 1-158 (MFIDTAKIFV…RWIKLELKLL (158 aa)). One can recognise an OBG-type G domain in the interval 159 to 331 (ADVGLIGFPN…LMKEAARLLS (173 aa)). GTP contacts are provided by residues 165–172 (GFPNVGKS), 190–194 (FTTLK), 212–215 (DIPG), 282–285 (NKSD), and 312–314 (SAA). Mg(2+) contacts are provided by serine 172 and threonine 192. Residues 345–424 (RFIEEEKRFT…LNDFEFDFLL (80 aa)) enclose the OCT domain.

Belongs to the TRAFAC class OBG-HflX-like GTPase superfamily. OBG GTPase family. As to quaternary structure, monomer. Mg(2+) serves as cofactor.

The protein resides in the cytoplasm. In terms of biological role, an essential GTPase which binds GTP, GDP and possibly (p)ppGpp with moderate affinity, with high nucleotide exchange rates and a fairly low GTP hydrolysis rate. Plays a role in control of the cell cycle, stress response, ribosome biogenesis and in those bacteria that undergo differentiation, in morphogenesis control. This is GTPase Obg from Clostridium botulinum (strain Langeland / NCTC 10281 / Type F).